Consider the following 96-residue polypeptide: Co-chaperonin GroES (96 aa).

The protein belongs to the GroES chaperonin family. In terms of assembly, heptamer of 7 subunits arranged in a ring. Interacts with the chaperonin GroEL.

The protein resides in the cytoplasm. In terms of biological role, together with the chaperonin GroEL, plays an essential role in assisting protein folding. The GroEL-GroES system forms a nano-cage that allows encapsulation of the non-native substrate proteins and provides a physical environment optimized to promote and accelerate protein folding. GroES binds to the apical surface of the GroEL ring, thereby capping the opening of the GroEL channel. This chain is Co-chaperonin GroES, found in Hahella chejuensis (strain KCTC 2396).